A 196-amino-acid polypeptide reads, in one-letter code: Ribosomal RNA large subunit methyltransferase E (196 aa).

S-adenosyl-L-methionine contacts are provided by Gly-50, Trp-52, Asp-70, Asp-87, and Asp-112. The active-site Proton acceptor is the Lys-152.

It belongs to the class I-like SAM-binding methyltransferase superfamily. RNA methyltransferase RlmE family.

The protein localises to the cytoplasm. The enzyme catalyses uridine(2552) in 23S rRNA + S-adenosyl-L-methionine = 2'-O-methyluridine(2552) in 23S rRNA + S-adenosyl-L-homocysteine + H(+). Its function is as follows. Specifically methylates the uridine in position 2552 of 23S rRNA at the 2'-O position of the ribose in the fully assembled 50S ribosomal subunit. The polypeptide is Ribosomal RNA large subunit methyltransferase E (Bdellovibrio bacteriovorus (strain ATCC 15356 / DSM 50701 / NCIMB 9529 / HD100)).